The following is a 123-amino-acid chain: Small ribosomal subunit protein uS12cz/uS12cy (123 aa).

It belongs to the universal ribosomal protein uS12 family. In terms of assembly, part of the 30S ribosomal subunit.

The protein resides in the plastid. It localises to the chloroplast. In terms of biological role, with S4 and S5 plays an important role in translational accuracy. Located at the interface of the 30S and 50S subunits. The sequence is that of Small ribosomal subunit protein uS12cz/uS12cy (rps12-A) from Cucumis sativus (Cucumber).